The chain runs to 1391 residues: MSALLAGARFLLRPGLRALPAPCVRLSPGQGRYLNNTPGHFAIAAQQKGHIHEEPVSAVRAKQAQQFDWALNKLDSSVRRTGRITKTLLQKIFHDVCRTGYPSSNQALLLLRSCGSLLPELQMSERTEMAHRIWEKLQELGAVFDVSHYNALLKVYLQNEHKFSPTEYLAKMEAANVQPNRVTYQRLIAAYCNEGDIEGASKILGFMKNKDLPITEAVFNTLVTGHARAGDMENAKNILSVMRSAGIEPGPETYVALLTAYAEKGDINNIKQTLENVEKNEGSLTDRDLMQVIWSLAKAGYPQYVQDIVERMRYDRGYIPDAMNLCLSLMTQGFEDVAFLVLKSFSAASHDSPNGDSLHHGNFFLRHCVNLDKPANKVKQFCDGLKEENLHSAPLQFALYCSLDAKKADLALELMKMMKQEGMPVRPHYCWPLLISFQKEKNAEGTIKVIKALSEIGVELDVETYSNYVLSVFNDVKSARAQLQEHGCTVDSSWFNLAELRHDAVSGNLEEVYSLLSSPSFPSVDLGHFRGSLITAFKRSNNVDLKAKITELLYKDGRYCQAASGPNEAVGYFLYNLIDSMSDAEVQAKEEHLRQYFHQLKNANIVISANIYRGIRNLLDSSHVPELIKDVIVLVDSQETLTSSDIAKSAELKASTLEEEIETLKAENKPFGDVLKQLVMIHCSEENMQKALEVKAKYEQENLAIGTYAALIQLCCRHDNPDEALNLKQELNRKDSSAVLDTSKYLALVKVFGKNGRIADAINVLKEMKEKDVPLKETTTTSFFHILNAAALRGDAETVDKIHESIVTLGLAKPTSNLCSPLVSVHLEKGDLPAAMETLFTCSKKYNCMPRLHDVLCRLVEKGDTDLLQKAMDHISQERGEMAMLYDLLFAFLHTGKYKEARKIIETPGLRARPGRLQWFAEKCIATNQMEALENLVDMTQKLFECDRDDMYYYLLKLCKENDDWKKADSAWTKIQEENVIPRERTLRLLADIFRRNGQEVPFDVPETWYKDAAESKVLASSSAPSSPESSFQKRVQVLSKKNRAKDAYEAFMEGENNGTAMSASAYSSLIRSMLSEGMLEEAKKVLNTAENHIKGFTLNDAASSLLIITQVRRDYLKDALASLKAMLEGDKVPTQLAVTRLVQALALKGDLEGIEVVENMMRNIGSSIRLSQMLFINNKMLAHLKRGKTEEAIELIEPLYTGTDSQVTSISYVFRKAMEEKMESALEKLSGMAERLANQFAVYRPVTDLFLQYIQVGRKDDARFLLQRCGSIAEQTPVLVSFISRSAQIPGQAQLIKDLLELIPEFSERETAYSYLMKCYATDKDATAATALYEKMKSESVSPDELFLKRLAVLLREAGEPVPFSEPPESFKFYADKLKKDKADSYDDEH.

The N-terminal 42 residues, methionine 1 to alanine 42, are a transit peptide targeting the mitochondrion. PPR repeat units follow at residues leucine 110–phenylalanine 144, aspartate 145–proline 179, asparagine 180–isoleucine 214, threonine 215–proline 249, glycine 250–leucine 284, asparagine 389–valine 425, alanine 704–alanine 738, aspartate 741–leucine 775, threonine 779–lysine 813, threonine 815–proline 850, arginine 948–proline 982, proline 1028–methionine 1062, serine 1063–histidine 1093, asparagine 1100–proline 1134, and arginine 1310–proline 1344. Residues lysine 1118 to tyrosine 1387 are RNA-binding.

The protein resides in the mitochondrion. Its subcellular location is the nucleus. In terms of biological role, may play a role in RNA metabolism in both nuclei and mitochondria. May bind mature mRNA in the nucleus outer membrane. In mitochondria binds to poly(A) mRNA. May be involved in transcription regulation. Binds single-stranded DNA. The chain is Leucine-rich PPR motif-containing protein, mitochondrial (lrpprc) from Xenopus tropicalis (Western clawed frog).